Consider the following 141-residue polypeptide: Putative inactive deoxyuridine 5'-triphosphate nucleotidohydrolase-like protein FLJ16323 (141 aa).

Belongs to the dUTPase family.

This Homo sapiens (Human) protein is Putative inactive deoxyuridine 5'-triphosphate nucleotidohydrolase-like protein FLJ16323.